The sequence spans 344 residues: N-acetyl-gamma-glutamyl-phosphate reductase 1 (344 aa).

C150 is a catalytic residue.

It belongs to the NAGSA dehydrogenase family. Type 1 subfamily.

It localises to the cytoplasm. It catalyses the reaction N-acetyl-L-glutamate 5-semialdehyde + phosphate + NADP(+) = N-acetyl-L-glutamyl 5-phosphate + NADPH + H(+). Its pathway is amino-acid biosynthesis; L-arginine biosynthesis; N(2)-acetyl-L-ornithine from L-glutamate: step 3/4. In terms of biological role, catalyzes the NADPH-dependent reduction of N-acetyl-5-glutamyl phosphate to yield N-acetyl-L-glutamate 5-semialdehyde. In Pseudomonas putida (strain ATCC 47054 / DSM 6125 / CFBP 8728 / NCIMB 11950 / KT2440), this protein is N-acetyl-gamma-glutamyl-phosphate reductase 1.